The sequence spans 517 residues: Nicotine N-demethylase CYP82E4 (517 aa).

The chain crosses the membrane as a helical span at residues 2 to 22 (LSPIEAIVGLVTFTFLFYFLW). Lys-254 participates in a covalent cross-link: Glycyl lysine isopeptide (Lys-Gly) (interchain with G-Cter in ubiquitin). Position 457 (Cys-457) interacts with heme.

The protein belongs to the cytochrome P450 family. CYP82E2 subfamily. Requires heme as cofactor. In terms of tissue distribution, expressed in leaves.

It localises to the membrane. It catalyses the reaction (S)-nicotine + reduced [NADPH--hemoprotein reductase] + O2 = (S)-nornicotine + formaldehyde + oxidized [NADPH--hemoprotein reductase] + H2O + H(+). It functions in the pathway alkaloid biosynthesis; nicotine biosynthesis. Functionally, involved in the biosynthesis of pyridine alkaloid natural products, leading mainly to the production of anabasine, anatabine, nicotine and nornicotine, effective deterrents against herbivores with antiparasitic and pesticide properties (neurotoxins); nornicotine serves as the precursor in the synthesis of the carcinogen compound N'-nitrosonornicotine (NNN). Catalyzes the demethylation of nicotine to form nornicotine. The polypeptide is Nicotine N-demethylase CYP82E4 (Nicotiana tomentosiformis (Tobacco)).